We begin with the raw amino-acid sequence, 264 residues long: S-adenosylmethionine decarboxylase proenzyme (264 aa).

Serine 112 serves as the catalytic Schiff-base intermediate with substrate; via pyruvic acid. At serine 112 the chain carries Pyruvic acid (Ser); by autocatalysis. Histidine 117 functions as the Proton acceptor; for processing activity in the catalytic mechanism. Cysteine 140 serves as the catalytic Proton donor; for catalytic activity.

The protein belongs to the prokaryotic AdoMetDC family. Type 2 subfamily. In terms of assembly, heterooctamer of four alpha and four beta chains arranged as a tetramer of alpha/beta heterodimers. Requires pyruvate as cofactor. In terms of processing, is synthesized initially as an inactive proenzyme. Formation of the active enzyme involves a self-maturation process in which the active site pyruvoyl group is generated from an internal serine residue via an autocatalytic post-translational modification. Two non-identical subunits are generated from the proenzyme in this reaction, and the pyruvate is formed at the N-terminus of the alpha chain, which is derived from the carboxyl end of the proenzyme. The post-translation cleavage follows an unusual pathway, termed non-hydrolytic serinolysis, in which the side chain hydroxyl group of the serine supplies its oxygen atom to form the C-terminus of the beta chain, while the remainder of the serine residue undergoes an oxidative deamination to produce ammonia and the pyruvoyl group blocking the N-terminus of the alpha chain.

The enzyme catalyses S-adenosyl-L-methionine + H(+) = S-adenosyl 3-(methylsulfanyl)propylamine + CO2. It functions in the pathway amine and polyamine biosynthesis; S-adenosylmethioninamine biosynthesis; S-adenosylmethioninamine from S-adenosyl-L-methionine: step 1/1. Functionally, catalyzes the decarboxylation of S-adenosylmethionine to S-adenosylmethioninamine (dcAdoMet), the propylamine donor required for the synthesis of the polyamines spermine and spermidine from the diamine putrescine. This Yersinia pseudotuberculosis serotype I (strain IP32953) protein is S-adenosylmethionine decarboxylase proenzyme.